The primary structure comprises 204 residues: Protein Nef (204 aa).

Positions 1–27 (MGNKWSKSWPQVRDRMRRAAPAPAADG) are disordered. Residue Gly-2 is the site of N-myristoyl glycine; by host attachment. Ser-6 carries the phosphoserine; by host modification. The segment at 60–63 (TEEE) is acidic; interacts with host PACS1 and PACS2; stabilizes the interaction of NEF/MHC-I with host AP1M1; necessary for MHC-I internalization. The segment at 67–76 (PVRPQVPLRP) is SH3-binding; interaction with Src family tyrosine kinases. A PxxP; stabilizes the interaction of NEF/MHC-I with host AP1M1; necessary for MHC-I internalization motif is present at residues 70 to 73 (PQVP). The interval 106–122 (EILDLWVHNTQGYFPDW) is mediates dimerization, Nef-PTE1 interaction. A binding to ATP6V1H region spans residues 146–178 (VDPSEVEEANEGENNCLLHPACQHGIEDEEREV). The Dileucine internalization motif; necessary for CD4 internalization motif lies at 162–163 (LL). Positions 172–173 (ED) match the Diacidic; necessary for CD4 internalization motif.

Belongs to the lentivirus primate group Nef protein family. Monomer; cytosolic form. Homodimer; membrane bound form. Interacts with Nef associated p21-activated kinase (PAK2); this interaction activates PAK2. Associates with the Nef-MHC-I-AP1 complex; this complex is required for MHC-I internalization. Interacts (via C-terminus) with host PI3-kinase. Interacts with host PACS1; this interaction seems to be weak. Interacts with host PACS2. Interacts with host LCK and MAPK3; these interactions inhibit the kinase activity of the latter. Interacts with host ATP6V1H; this interaction may play a role in CD4 endocytosis. Associates with the CD4-Nef-AP2 complex; this complex is required for CD4 internalization. Interacts with host AP2 subunit alpha and AP2 subunit sigma2. Interacts with TCR-zeta chain; this interaction up-regulates the Fas ligand (FasL) surface expression. Interacts with host HCK, LYN, and SRC; these interactions activate the Src family kinases. Interacts with MAP3K5; this interaction inhibits the Fas and TNFR-mediated death signals. Interacts with beta-COP and PTE1. Interacts with human RACK1; this increases Nef phosphorylation by PKC. Interacts with TP53; this interaction decreases the half-life of TP53, protecting the infected cell against p53-mediated apoptosis. The virion-associated Nef proteins are cleaved by the viral protease to release the soluble C-terminal core protein. Nef is probably cleaved concomitantly with viral structural proteins on maturation of virus particles. Post-translationally, myristoylated. In terms of processing, phosphorylated on serine residues, probably by host PKCdelta and theta.

It is found in the host cell membrane. It localises to the virion. The protein localises to the secreted. Its subcellular location is the host Golgi apparatus membrane. Factor of infectivity and pathogenicity, required for optimal virus replication. Alters numerous pathways of T-lymphocyte function and down-regulates immunity surface molecules in order to evade host defense and increase viral infectivity. Alters the functionality of other immunity cells, like dendritic cells, monocytes/macrophages and NK cells. In terms of biological role, in infected CD4(+) T-lymphocytes, down-regulates the surface MHC-I, mature MHC-II, CD4, CD28, CCR5 and CXCR4 molecules. Mediates internalization and degradation of host CD4 through the interaction of with the cytoplasmic tail of CD4, the recruitment of AP-2 (clathrin adapter protein complex 2), internalization through clathrin coated pits, and subsequent transport to endosomes and lysosomes for degradation. Diverts host MHC-I molecules to the trans-Golgi network-associated endosomal compartments by an endocytic pathway to finally target them for degradation. MHC-I down-regulation may involve AP-1 (clathrin adapter protein complex 1) or possibly Src family kinase-ZAP70/Syk-PI3K cascade recruited by PACS2. In consequence infected cells are masked for immune recognition by cytotoxic T-lymphocytes. Decreasing the number of immune receptors also prevents reinfection by more HIV particles (superinfection). Down-regulates host SERINC3 and SERINC5 thereby excluding these proteins from the viral particles. Virion infectivity is drastically higher when SERINC3 or SERINC5 are excluded from the viral envelope, because these host antiviral proteins impair the membrane fusion event necessary for subsequent virion penetration. Functionally, bypasses host T-cell signaling by inducing a transcriptional program nearly identical to that of anti-CD3 cell activation. Interaction with TCR-zeta chain up-regulates the Fas ligand (FasL). Increasing surface FasL molecules and decreasing surface MHC-I molecules on infected CD4(+) cells send attacking cytotoxic CD8+ T-lymphocytes into apoptosis. Its function is as follows. Plays a role in optimizing the host cell environment for viral replication without causing cell death by apoptosis. Protects the infected cells from apoptosis in order to keep them alive until the next virus generation is ready to strike. Inhibits the Fas and TNFR-mediated death signals by blocking MAP3K5/ASK1. Decreases the half-life of TP53, protecting the infected cell against p53-mediated apoptosis. Inhibits the apoptotic signals regulated by the Bcl-2 family proteins through the formation of a Nef/PI3-kinase/PAK2 complex that leads to activation of PAK2 and induces phosphorylation of host BAD. Extracellular Nef protein targets CD4(+) T-lymphocytes for apoptosis by interacting with CXCR4 surface receptors. This Homo sapiens (Human) protein is Protein Nef.